A 557-amino-acid chain; its full sequence is Eukaryotic translation initiation factor 3 subunit D-2 (557 aa).

The tract at residues Gln292 to Pro306 is RNA gate. A disordered region spans residues Phe533–Leu557. The span at Asp545–Leu557 shows a compositional bias: basic and acidic residues.

Belongs to the eIF-3 subunit D family. In terms of assembly, component of the eukaryotic translation initiation factor 3 (eIF-3) complex. The eIF-3 complex interacts with pix.

The protein localises to the cytoplasm. Functionally, mRNA cap-binding component of the eukaryotic translation initiation factor 3 (eIF-3) complex, which is involved in protein synthesis of a specialized repertoire of mRNAs and, together with other initiation factors, stimulates binding of mRNA and methionyl-tRNAi to the 40S ribosome. The eIF-3 complex specifically targets and initiates translation of a subset of mRNAs involved in cell proliferation. In the eIF-3 complex, eif3d specifically recognizes and binds the 7-methylguanosine cap of a subset of mRNAs. This is Eukaryotic translation initiation factor 3 subunit D-2 from Drosophila grimshawi (Hawaiian fruit fly).